Here is a 327-residue protein sequence, read N- to C-terminus: tRNA uridine(34) hydroxylase (327 aa).

A Rhodanese domain is found at Leu130–Glu224. The active-site Cysteine persulfide intermediate is Cys184.

It belongs to the TrhO family.

It catalyses the reaction uridine(34) in tRNA + AH2 + O2 = 5-hydroxyuridine(34) in tRNA + A + H2O. Functionally, catalyzes oxygen-dependent 5-hydroxyuridine (ho5U) modification at position 34 in tRNAs. In Streptococcus thermophilus (strain ATCC BAA-491 / LMD-9), this protein is tRNA uridine(34) hydroxylase.